Here is a 148-residue protein sequence, read N- to C-terminus: General odorant-binding protein 69a (148 aa).

The N-terminal stretch at 1-23 is a signal peptide; the sequence is MVARHFSFFLALLILYDLIPSNQ. 3 disulfides stabilise this stretch: C42-C74, C70-C121, and C112-C130.

The protein belongs to the PBP/GOBP family. Expressed in the antenna, mostly on the anterior surface of the third antennal segment. Expressed in auxiliary cells and the third antennal segment and exported to the sensillar lymph (at protein level).

Its subcellular location is the secreted. In terms of biological role, odorant-binding protein required for olfactory behavior and activity of pheromone-sensitive neurons in response to the male-specific pheromone cis-vaccenyl acetate (cVA). Modulates social responsivity differently in males and females, regulating male aggression and female receptivity respectively. The chain is General odorant-binding protein 69a (Obp69a) from Drosophila melanogaster (Fruit fly).